The following is a 228-amino-acid chain: NAD(P)H-quinone oxidoreductase subunit K, chloroplastic (228 aa).

Cys-43, Cys-44, Cys-108, and Cys-139 together coordinate [4Fe-4S] cluster.

Belongs to the complex I 20 kDa subunit family. NDH is composed of at least 16 different subunits, 5 of which are encoded in the nucleus. [4Fe-4S] cluster is required as a cofactor.

The protein localises to the plastid. The protein resides in the chloroplast thylakoid membrane. The catalysed reaction is a plastoquinone + NADH + (n+1) H(+)(in) = a plastoquinol + NAD(+) + n H(+)(out). It catalyses the reaction a plastoquinone + NADPH + (n+1) H(+)(in) = a plastoquinol + NADP(+) + n H(+)(out). NDH shuttles electrons from NAD(P)H:plastoquinone, via FMN and iron-sulfur (Fe-S) centers, to quinones in the photosynthetic chain and possibly in a chloroplast respiratory chain. The immediate electron acceptor for the enzyme in this species is believed to be plastoquinone. Couples the redox reaction to proton translocation, and thus conserves the redox energy in a proton gradient. This Ceratophyllum demersum (Rigid hornwort) protein is NAD(P)H-quinone oxidoreductase subunit K, chloroplastic.